A 216-amino-acid chain; its full sequence is Uracil phosphoribosyltransferase (216 aa).

Residues arginine 30, arginine 39, 73–76, and lysine 75 each bind GTP; that span reads ASKI. Arginine 83 serves as a coordination point for 5-phospho-alpha-D-ribose 1-diphosphate. Lysine 100 contributes to the GTP binding site. Residue arginine 108 coordinates 5-phospho-alpha-D-ribose 1-diphosphate. Arginine 129 provides a ligand contact to GTP. 5-phospho-alpha-D-ribose 1-diphosphate is bound by residues aspartate 135 and 135–143; that span reads DPMLATGGT. A D-ribose 5-phosphate-binding site is contributed by tyrosine 199. Residues isoleucine 200 and 205–207 each bind uracil; that span reads GDF. Aspartate 206 contributes to the 5-phospho-alpha-D-ribose 1-diphosphate binding site.

It belongs to the UPRTase family. Requires Mg(2+) as cofactor.

The enzyme catalyses UMP + diphosphate = 5-phospho-alpha-D-ribose 1-diphosphate + uracil. It functions in the pathway pyrimidine metabolism; UMP biosynthesis via salvage pathway; UMP from uracil: step 1/1. Allosterically activated by GTP. In terms of biological role, catalyzes the conversion of uracil and 5-phospho-alpha-D-ribose 1-diphosphate (PRPP) to UMP and diphosphate. In Dictyostelium discoideum (Social amoeba), this protein is Uracil phosphoribosyltransferase (uprt).